Reading from the N-terminus, the 339-residue chain is Arylacetonitrilase (339 aa).

One can recognise a CN hydrolase domain in the interval 5–290 (IRVAVTQAEP…EGIVYADLDL (286 aa)). Glu45 acts as the Proton acceptor in catalysis. The active site involves Lys126. Cys167 serves as the catalytic Nucleophile.

Belongs to the carbon-nitrogen hydrolase superfamily. Nitrilase family.

The catalysed reaction is a nitrile + 2 H2O = a carboxylate + NH4(+). The enzyme catalyses 4-chlorophenylacetonitrile + 2 H2O = 4-chlorophenylacetate + NH4(+). In terms of biological role, nitrilase that hydrolyzes preferentially phenylacetonitrile, (R,S)-mandelonitrile, and 3-indolylacetonitrile. This chain is Arylacetonitrilase, found in Fusarium vanettenii (strain ATCC MYA-4622 / CBS 123669 / FGSC 9596 / NRRL 45880 / 77-13-4) (Fusarium solani subsp. pisi).